A 217-amino-acid polypeptide reads, in one-letter code: MASKVSRDTLYEGVNGLLEASAKKKRGFLETVELQIGLKNYDPQKDKRFSGTVKLKHIPRPKMKVCILGDQQHCDEAKANNVDFMDAEALKKLNKNKKLVKKLAKSYDAFLASESLIKQIPRLLGPGLNKAGKFPALLSHQESMIGKIEEVKSTIKFQMKKVLCLSVAVGHVGMKSDELAQNVNLSINFLVSLLKKNWQNVRSLHVKSSMGPPQRLY.

This sequence belongs to the universal ribosomal protein uL1 family.

The sequence is that of Large ribosomal subunit protein uL1 (RpL10Ab) from Drosophila melanogaster (Fruit fly).